Reading from the N-terminus, the 328-residue chain is HTH-type transcriptional regulator MalR (328 aa).

The region spanning 2–57 (PVTIKDVAKAAGVSPSTVTRVIQNKSTISDETKKRVRKAMKELNYHPNLNARSLVS) is the HTH lacI-type domain. The H-T-H motif DNA-binding region spans 5 to 24 (IKDVAKAAGVSPSTVTRVIQ). The inducer binding stretch occupies residues 173-218 (TEYFIKKGCKRIAFIGGSKKLFVTKDRLTGYEQALKHYKLTTDNNR). A dimerization region spans residues 282 to 291 (NLAAYVDINS).

Its function is as follows. Transcriptional repressor of the maltosaccharide utilization operons malxCD and malMP. The chain is HTH-type transcriptional regulator MalR (malR) from Streptococcus pneumoniae serotype 4 (strain ATCC BAA-334 / TIGR4).